The chain runs to 528 residues: MGLEVLEALDSARTQWYHVTAIVIAGMGFFTDAYDLFCISTVSKLLGRLYYFDPSTNKPGKLPPSVNNVVTGVALVGTLSGQLVFGWLGDKLGRKKVYGVTLIIMVACAICSGLSFGSSAKSVMITLCFFRFWLGFGIGGDYPLSATIMSEYANKRTRGAFIAAVFAMQGVGIIFAGLVSMVFSGIFKAYYQAPRFNEDPILSTQPEGDLLWRLILMIGAVPAAMTYYWRMKMPETGRYTAIVEGNAKQAAADMARVLDIEIIAEQDKLAEFKAANDYPLWSSEFFNRHGRHLIGTMSCWFLLDIAFYSQNLTQKDIYPAMGLIRQDKEMNAIDEVFQTSRAMFVVALFGTFPGYWFTVFFIEKLGRFKIQLVGFFMMSFFMFVIGVKYEYLKDENKNLFALLYGLTFFFANFGPNSTTFVLPAELFPTRVRSTCHAFSAASGKAGAMVGAFGIQYYTLDGTPRKIRRAMMILAFTNLIGFFCTFLVTETKGRSLEEISGEDGRESELTATPNDRAPGIRQDSRTEKM.

The Cytoplasmic segment spans residues 1–18; it reads MGLEVLEALDSARTQWYH. The chain crosses the membrane as a helical span at residues 19 to 39; it reads VTAIVIAGMGFFTDAYDLFCI. The Extracellular segment spans residues 40–68; it reads STVSKLLGRLYYFDPSTNKPGKLPPSVNN. A helical membrane pass occupies residues 69-89; that stretch reads VVTGVALVGTLSGQLVFGWLG. Residues 90-96 lie on the Cytoplasmic side of the membrane; it reads DKLGRKK. The helical transmembrane segment at 97-117 threads the bilayer; it reads VYGVTLIIMVACAICSGLSFG. The Extracellular portion of the chain corresponds to 118–122; the sequence is SSAKS. The helical transmembrane segment at 123–143 threads the bilayer; the sequence is VMITLCFFRFWLGFGIGGDYP. The Cytoplasmic portion of the chain corresponds to 144 to 158; it reads LSATIMSEYANKRTR. A helical membrane pass occupies residues 159-179; the sequence is GAFIAAVFAMQGVGIIFAGLV. Topologically, residues 180–208 are extracellular; sequence SMVFSGIFKAYYQAPRFNEDPILSTQPEG. A helical transmembrane segment spans residues 209–229; the sequence is DLLWRLILMIGAVPAAMTYYW. Residues 230-292 are Cytoplasmic-facing; it reads RMKMPETGRY…SEFFNRHGRH (63 aa). A helical transmembrane segment spans residues 293–313; sequence LIGTMSCWFLLDIAFYSQNLT. At 314 to 341 the chain is on the extracellular side; it reads QKDIYPAMGLIRQDKEMNAIDEVFQTSR. The chain crosses the membrane as a helical span at residues 342–362; it reads AMFVVALFGTFPGYWFTVFFI. Residues 363–371 are Cytoplasmic-facing; sequence EKLGRFKIQ. Residues 372-392 form a helical membrane-spanning segment; the sequence is LVGFFMMSFFMFVIGVKYEYL. Over 393-401 the chain is Extracellular; it reads KDENKNLFA. The helical transmembrane segment at 402–422 threads the bilayer; that stretch reads LLYGLTFFFANFGPNSTTFVL. At 423–433 the chain is on the cytoplasmic side; the sequence is PAELFPTRVRS. Residues 434 to 454 traverse the membrane as a helical segment; the sequence is TCHAFSAASGKAGAMVGAFGI. Topologically, residues 455–468 are extracellular; the sequence is QYYTLDGTPRKIRR. Residues 469-489 traverse the membrane as a helical segment; sequence AMMILAFTNLIGFFCTFLVTE. The Cytoplasmic segment spans residues 490-528; the sequence is TKGRSLEEISGEDGRESELTATPNDRAPGIRQDSRTEKM. Positions 497–507 are enriched in basic and acidic residues; the sequence is EISGEDGRESE. The tract at residues 497-528 is disordered; it reads EISGEDGRESELTATPNDRAPGIRQDSRTEKM.

It belongs to the major facilitator superfamily. Phosphate:H(+) symporter (TC 2.A.1.9) family. As to expression, mostly expressed in mycorrhizal roots. Also observed in root tips of non-mycorrhizal roots, in a phosphate (Pi) depended-manner, highest expression levels being observed in low Pi conditions.

Its subcellular location is the cell membrane. It carries out the reaction phosphate(in) + H(+)(in) = phosphate(out) + H(+)(out). Its function is as follows. Low-affinity transporter for external inorganic phosphate (Pi) probably involved in the acquisition of phosphate released by arbuscular mycorrhizal (AM) fungi (e.g. Gigaspora gigantea, Glomus versiforme and G.intraradices) during AM symbiosis; required for propper mycorrhizal arbuscule morphology. Acts as a Pi-sensing machinery at the root tip level, independently of AM fungi, involved in the regulation of early root branching and lateral roots formation. The polypeptide is Low affinity inorganic phosphate transporter 4 (Medicago truncatula (Barrel medic)).